The sequence spans 214 residues: MTHITGTLYIISAPSGAGKTSLVKALMDAQQEPQHGAQAKIRVSVSHTTRAMRPGEVDGVNYNFVDRAEFVRMIEHGDFLEQAEVFGNLYGTSQSHLQQTLDEGHDLILEIDWQGARQVRTQMPQARSIFILPPSQQALRQRLTNRGQDSDEIIEARMREAVSEMSHYNEYEYVVVNDDFAGALEDLKSIFRANRLTQQHQQEQYSELFQELLA.

A Guanylate kinase-like domain is found at 6–192 (GTLYIISAPS…ALEDLKSIFR (187 aa)). 13–20 (APSGAGKT) contributes to the ATP binding site.

The protein belongs to the guanylate kinase family.

The protein resides in the cytoplasm. It carries out the reaction GMP + ATP = GDP + ADP. In terms of biological role, essential for recycling GMP and indirectly, cGMP. The polypeptide is Guanylate kinase (Pseudomonas syringae pv. tomato (strain ATCC BAA-871 / DC3000)).